We begin with the raw amino-acid sequence, 93 residues long: OMEGA-ectatommitoxin(02)-Rm1c (93 aa).

Positions 1 to 30 (MKDSYISIVIAYLMVTFILVSSMPIEGEKG) are cleaved as a signal peptide. 3 cysteine pairs are disulfide-bonded: Cys-39/Cys-52, Cys-47/Cys-68, and Cys-70/Cys-79. In terms of domain architecture, EGF-like spans 43–80 (YENYCFNGKCVHVVAQDEPGKPCYSCICDEFYIGERCG).

The protein belongs to the EGF domain peptide family. In terms of tissue distribution, expressed by the venom gland.

It is found in the secreted. Functionally, ant peptide with probable defensive activity which acts as a potent agonist of the mammalian epidermal growth factor receptor (EGFR). Mimics, both structurally and functionally, vertebrate epidermal growth factor (EGF) peptide hormones. In vivo, intraplantar injection in mice causes long-lasting (several days) hypersensitivity of the injected paw to both mechanical and thermal stimuli. Its long-lasting effect is unusual for venom toxins whose effects are usually immediate. One possible explanation is that it would reduce the duration of a nest attack, discourage future attacks, or enhance the actions of subsequent exposure to other pain-inducing venom peptides. The polypeptide is OMEGA-ectatommitoxin(02)-Rm1c (Rhytidoponera metallica (Australian green-headed ant)).